The primary structure comprises 397 residues: Acetate kinase (397 aa).

Asparagine 8 contributes to the Mg(2+) binding site. Lysine 15 serves as a coordination point for ATP. Position 89 (arginine 89) interacts with substrate. Catalysis depends on aspartate 146, which acts as the Proton donor/acceptor. ATP is bound by residues 206 to 210 (HLGNG), 281 to 283 (DLR), and 329 to 333 (GVGEN). Glutamate 382 serves as a coordination point for Mg(2+).

It belongs to the acetokinase family. In terms of assembly, homodimer. The cofactor is Mg(2+). Mn(2+) serves as cofactor.

It is found in the cytoplasm. It catalyses the reaction acetate + ATP = acetyl phosphate + ADP. It participates in metabolic intermediate biosynthesis; acetyl-CoA biosynthesis; acetyl-CoA from acetate: step 1/2. Functionally, catalyzes the formation of acetyl phosphate from acetate and ATP. Can also catalyze the reverse reaction. The polypeptide is Acetate kinase (Bacillus thuringiensis subsp. konkukian (strain 97-27)).